The following is a 689-amino-acid chain: Beta-galactosidase Pbg (689 aa).

Arg118 lines the substrate pocket. Position 122 (Cys122) interacts with Zn(2+). Asn156 contributes to the substrate binding site. Glu157 functions as the Proton donor in the catalytic mechanism. Residues Cys162, Cys164, and Cys167 each contribute to the Zn(2+) site. Glu318 serves as the catalytic Nucleophile. Residues Trp326 and Glu366–His369 each bind substrate.

This sequence belongs to the glycosyl hydrolase 42 family.

The catalysed reaction is Hydrolysis of terminal non-reducing beta-D-galactose residues in beta-D-galactosides.. This chain is Beta-galactosidase Pbg, found in Clostridium perfringens (strain ATCC 13124 / DSM 756 / JCM 1290 / NCIMB 6125 / NCTC 8237 / Type A).